The sequence spans 210 residues: Ribosomal RNA large subunit methyltransferase E (210 aa).

5 residues coordinate S-adenosyl-L-methionine: glycine 60, tryptophan 62, aspartate 80, aspartate 96, and aspartate 122. The active-site Proton acceptor is the lysine 162.

The protein belongs to the class I-like SAM-binding methyltransferase superfamily. RNA methyltransferase RlmE family.

It is found in the cytoplasm. It catalyses the reaction uridine(2552) in 23S rRNA + S-adenosyl-L-methionine = 2'-O-methyluridine(2552) in 23S rRNA + S-adenosyl-L-homocysteine + H(+). In terms of biological role, specifically methylates the uridine in position 2552 of 23S rRNA at the 2'-O position of the ribose in the fully assembled 50S ribosomal subunit. The sequence is that of Ribosomal RNA large subunit methyltransferase E from Dichelobacter nodosus (strain VCS1703A).